The primary structure comprises 436 residues: Trigger factor (436 aa).

Residues 161 to 246 form the PPIase FKBP-type domain; that stretch reads DDQLNIDFVG…VNSVAEPKLP (86 aa).

This sequence belongs to the FKBP-type PPIase family. Tig subfamily.

The protein resides in the cytoplasm. The catalysed reaction is [protein]-peptidylproline (omega=180) = [protein]-peptidylproline (omega=0). Functionally, involved in protein export. Acts as a chaperone by maintaining the newly synthesized protein in an open conformation. Functions as a peptidyl-prolyl cis-trans isomerase. The chain is Trigger factor from Pseudomonas aeruginosa (strain LESB58).